A 140-amino-acid chain; its full sequence is uncharacterized protein (140 aa).

It belongs to the asfivirus D129L family.

This is an uncharacterized protein from African swine fever virus (isolate Pig/Kenya/KEN-50/1950) (ASFV).